The chain runs to 288 residues: Putative hydrolase LipZ (288 aa).

Belongs to the AB hydrolase superfamily.

In Mycobacterium tuberculosis (strain CDC 1551 / Oshkosh), this protein is Putative hydrolase LipZ.